A 309-amino-acid chain; its full sequence is Taste receptor type 2 member 8 (309 aa).

The Extracellular segment spans residues 1–7; that stretch reads MFSPADN. Residues 8 to 28 traverse the membrane as a helical segment; the sequence is IFIILITGEFILGILGNGYIA. Residues 29-50 are Cytoplasmic-facing; that stretch reads LVNWIDWIKKKKISTVDYILTN. A helical transmembrane segment spans residues 51-71; the sequence is LVIARICLISVMVVNGIVIVL. At 72–82 the chain is on the extracellular side; it reads NPDVYTKNKQQ. Residues 83–103 traverse the membrane as a helical segment; the sequence is IVIFTFWTFANYLNMWITTCL. At 104-131 the chain is on the cytoplasmic side; the sequence is NVFYFLKIASSSHPLFLWLKWKIDMVVH. The helical transmembrane segment at 132–152 threads the bilayer; it reads WILLGCFAISLLVSLIAAIVL. The Extracellular segment spans residues 153–184; sequence SCDYRFHAIAKHKRNITEMFHVSKXPYFEPLT. N-linked (GlcNAc...) asparagine glycosylation is present at Asn-167. The helical transmembrane segment at 185–205 threads the bilayer; it reads LFNLFAIVPFIVSLISFFLLV. The Cytoplasmic portion of the chain corresponds to 206–239; it reads RSLWRHTKQIKLYATGSRDPSTEVHVRAIKTMTS. The helical transmembrane segment at 240–260 threads the bilayer; sequence FIFFFFLYFISSILMTFSYLM. Residues 261–266 lie on the Extracellular side of the membrane; the sequence is TKYKLA. The helical transmembrane segment at 267 to 287 threads the bilayer; it reads VEFGEIAAILYPLGHSLILIV. The Cytoplasmic portion of the chain corresponds to 288-309; sequence LNNKLRQIFVRMLTCRKIACVI.

Belongs to the G-protein coupled receptor T2R family.

The protein localises to the membrane. Its function is as follows. Receptor that may play a role in the perception of bitterness and is gustducin-linked. May play a role in sensing the chemical composition of the gastrointestinal content. The activity of this receptor may stimulate alpha gustducin, mediate PLC-beta-2 activation and lead to the gating of TRPM5. The protein is Taste receptor type 2 member 8 (TAS2R8) of Pan paniscus (Pygmy chimpanzee).